The primary structure comprises 287 residues: ATP synthase gamma chain (287 aa).

It belongs to the ATPase gamma chain family. As to quaternary structure, F-type ATPases have 2 components, CF(1) - the catalytic core - and CF(0) - the membrane proton channel. CF(1) has five subunits: alpha(3), beta(3), gamma(1), delta(1), epsilon(1). CF(0) has three main subunits: a, b and c.

The protein resides in the cell membrane. Its function is as follows. Produces ATP from ADP in the presence of a proton gradient across the membrane. The gamma chain is believed to be important in regulating ATPase activity and the flow of protons through the CF(0) complex. The polypeptide is ATP synthase gamma chain (Bacillus velezensis (strain DSM 23117 / BGSC 10A6 / LMG 26770 / FZB42) (Bacillus amyloliquefaciens subsp. plantarum)).